Consider the following 78-residue polypeptide: U7-lycotoxin-Ls1h (78 aa).

A signal peptide spans 1 to 22 (MKLIIFTGLTLLLIVSLIDVEA). Positions 23-26 (QNEG) are excised as a propeptide.

It belongs to the neurotoxin 19 (CSTX) family. 07 (U7-Lctx) subfamily. Post-translationally, contains 4 disulfide bonds. As to expression, expressed by the venom gland.

It localises to the secreted. The sequence is that of U7-lycotoxin-Ls1h from Lycosa singoriensis (Wolf spider).